Consider the following 148-residue polypeptide: uncharacterized protein (148 aa).

This is an uncharacterized protein from Acheta domesticus (House cricket).